We begin with the raw amino-acid sequence, 946 residues long: Bifunctional glutamine synthetase adenylyltransferase/adenylyl-removing enzyme (946 aa).

The interval 1-440 (MKPLSSPLQQ…VFNELIGDDE (440 aa)) is adenylyl removase. The interval 449–946 (SEQWRELWQD…ASWQKWLVEE (498 aa)) is adenylyl transferase.

It belongs to the GlnE family. Mg(2+) is required as a cofactor.

It carries out the reaction [glutamine synthetase]-O(4)-(5'-adenylyl)-L-tyrosine + phosphate = [glutamine synthetase]-L-tyrosine + ADP. The catalysed reaction is [glutamine synthetase]-L-tyrosine + ATP = [glutamine synthetase]-O(4)-(5'-adenylyl)-L-tyrosine + diphosphate. Functionally, involved in the regulation of glutamine synthetase GlnA, a key enzyme in the process to assimilate ammonia. When cellular nitrogen levels are high, the C-terminal adenylyl transferase (AT) inactivates GlnA by covalent transfer of an adenylyl group from ATP to specific tyrosine residue of GlnA, thus reducing its activity. Conversely, when nitrogen levels are low, the N-terminal adenylyl removase (AR) activates GlnA by removing the adenylyl group by phosphorolysis, increasing its activity. The regulatory region of GlnE binds the signal transduction protein PII (GlnB) which indicates the nitrogen status of the cell. This is Bifunctional glutamine synthetase adenylyltransferase/adenylyl-removing enzyme from Shigella flexneri.